Here is a 429-residue protein sequence, read N- to C-terminus: Putative zinc metalloprotease aq_1964 (429 aa).

Residue H17 participates in Zn(2+) binding. The active site involves E18. H21 contacts Zn(2+). Residues 88–110 (ILIALGGPLFNFLFTILVFALVY) form a helical membrane-spanning segment. The region spanning 189–265 (TIKVPNVQKG…AIKLKILRNG (77 aa)) is the PDZ domain. 2 consecutive transmembrane segments (helical) span residues 369-391 (IFNLIPLPILDGGLILLFAIEWL) and 406-428 (RVGLAIIITLTIFVFINDILRLL).

It belongs to the peptidase M50B family. Zn(2+) serves as cofactor.

Its subcellular location is the cell inner membrane. This chain is Putative zinc metalloprotease aq_1964, found in Aquifex aeolicus (strain VF5).